An 80-amino-acid chain; its full sequence is Exodeoxyribonuclease 7 small subunit (80 aa).

This sequence belongs to the XseB family. As to quaternary structure, heterooligomer composed of large and small subunits.

It is found in the cytoplasm. It carries out the reaction Exonucleolytic cleavage in either 5'- to 3'- or 3'- to 5'-direction to yield nucleoside 5'-phosphates.. In terms of biological role, bidirectionally degrades single-stranded DNA into large acid-insoluble oligonucleotides, which are then degraded further into small acid-soluble oligonucleotides. In Pseudomonas putida (strain GB-1), this protein is Exodeoxyribonuclease 7 small subunit.